The primary structure comprises 206 residues: Ribonuclease HII (206 aa).

In terms of domain architecture, RNase H type-2 spans 14–206; the sequence is ALVCGIDEAG…FRLRQLGEKP (193 aa). A divalent metal cation is bound by residues Asp-20, Glu-21, and Asp-117.

The protein belongs to the RNase HII family. It depends on Mn(2+) as a cofactor. Mg(2+) serves as cofactor.

The protein resides in the cytoplasm. It carries out the reaction Endonucleolytic cleavage to 5'-phosphomonoester.. Functionally, endonuclease that specifically degrades the RNA of RNA-DNA hybrids. This is Ribonuclease HII from Pelodictyon phaeoclathratiforme (strain DSM 5477 / BU-1).